The following is a 147-amino-acid chain: Cyanate hydratase (147 aa).

Active-site residues include R88, E91, and S114.

The protein belongs to the cyanase family.

It catalyses the reaction cyanate + hydrogencarbonate + 3 H(+) = NH4(+) + 2 CO2. Catalyzes the reaction of cyanate with bicarbonate to produce ammonia and carbon dioxide. The protein is Cyanate hydratase of Prochlorococcus marinus subsp. pastoris (strain CCMP1986 / NIES-2087 / MED4).